Here is a 471-residue protein sequence, read N- to C-terminus: MLLSNVAVNRTVVHTQLVSGSRSALHALSRTSHSVPVTHTHQRRHIFSHKRRLSSSTLAIPFALSNTNSATTAPLQFLSNVSLCRVTPGTITTSAKATAPNLDKMSAEAATTAAQASASPVEDSFLKKAVSCQSETEREAVMAARAAKKALRETKETWWAPYVALTKPRLTVLVVLSAMSSYALTPEAVSLTNLLFLTVGTALCSGSANAINMGREPAYDSMMTRTRGRPVVRGAVTPNQAFTFAGITGTVGTAALYFGVNPTVAILGASNIALYGGLYTTLKRKHIINTWVGAVVGAIPPLMGWAASGGSLLHPGAWCLAGLLYAWQFPHFNALSYSIRDEYKKAGYVMTAWKNPGLNARVGLRYALLMFPLCVGLSYYNVTDWWFVLDSSVLNAWMAWWAFKFWQQENVNIALAAAGKQYSQNPFARKLFWGSVVHLPGVLLLAMIHKKGQWDWLFGPSEDEKKKTLSS.

Residues 1 to 60 (MLLSNVAVNRTVVHTQLVSGSRSALHALSRTSHSVPVTHTHQRRHIFSHKRRLSSSTLAI) constitute a mitochondrion transit peptide. The next 6 membrane-spanning stretches (helical) occupy residues 188-208 (AVSL…SGSA), 247-267 (ITGT…VAIL), 287-307 (IINT…GWAA), 312-332 (LLHP…FPHF), 368-388 (LLMF…WWFV), and 430-450 (KLFW…MIHK).

It belongs to the UbiA prenyltransferase family.

Its subcellular location is the mitochondrion membrane. The enzyme catalyses heme b + (2E,6E)-farnesyl diphosphate + H2O = Fe(II)-heme o + diphosphate. In terms of biological role, converts protoheme IX and farnesyl diphosphate to heme O. The polypeptide is Protoheme IX farnesyltransferase, mitochondrial (COX10) (Yarrowia lipolytica (strain CLIB 122 / E 150) (Yeast)).